The sequence spans 95 residues: YcgL domain-containing protein APJL_0712 (95 aa).

The YcgL domain occupies H4 to L88.

The polypeptide is YcgL domain-containing protein APJL_0712 (Actinobacillus pleuropneumoniae serotype 3 (strain JL03)).